Here is a 62-residue protein sequence, read N- to C-terminus: Large ribosomal subunit protein bL28 (62 aa).

The protein belongs to the bacterial ribosomal protein bL28 family.

The sequence is that of Large ribosomal subunit protein bL28 from Desulforamulus reducens (strain ATCC BAA-1160 / DSM 100696 / MI-1) (Desulfotomaculum reducens).